A 458-amino-acid chain; its full sequence is Opine oxidase subunit A (458 aa).

The protein to T-protein and to dimethylglycine dehydrogenase. As to quaternary structure, heterodimer of a subunit A and a subunit B.

Its pathway is opine metabolism; octopine degradation. Oxidative cleavage of octopine into L-arginine and pyruvate. This Rhizobium meliloti (strain 1021) (Ensifer meliloti) protein is Opine oxidase subunit A (ooxA).